Consider the following 753-residue polypeptide: Cell cycle progression protein 1 (753 aa).

Residues 1–218 lie on the Cytoplasmic side of the membrane; it reads MSESSSDSDS…KRHFSRGLNK (218 aa). The interval 1–307 is interaction with MCF2L and SRC; the sequence is MSESSSDSDS…QKKNLAAENQ (307 aa). Residues 57–211 are disordered; it reads HGGEESSANN…EPSKEPSKRH (155 aa). Polar residues-rich tracts occupy residues 62–78 and 122–138; these read SSAN…LSSM and QEVT…LNMG. A compositionally biased stretch (basic residues) spans 176–185; that stretch reads PRRRRNRKKT. Position 187 is a phosphoserine (serine 187). Residues 190 to 201 show a composition bias toward acidic residues; it reads ESEEPPLAEPED. Residues 219–239 traverse the membrane as a helical; Signal-anchor for type II membrane protein segment; the sequence is CVILALVIAVSMGFGHFYGTI. At 240 to 753 the chain is on the lumenal side; that stretch reads QIQKQLVRKT…YIKPCYYNSF (514 aa). A coiled-coil region spans residues 298-449; it reads QKKNLAAENQ…EQQRSDLWER (152 aa). The segment covering 457–467 has biased composition (basic and acidic residues); the sequence is QHGKQETDGRK. A disordered region spans residues 457 to 484; that stretch reads QHGKQETDGRKRGSRGSHRAKSKSKETF. Over residues 468–478 the composition is skewed to basic residues; the sequence is RGSRGSHRAKS. Positions 503–529 form a coiled coil; it reads VRHHKEKIKQAKEAVKENLKKFSDSVK. Positions 553 to 563 are enriched in basic and acidic residues; that stretch reads APKEAATEKTR. The disordered stretch occupies residues 553-606; it reads APKEAATEKTRTAYSYSSYSQQEAPNQNQNCRRPSAQRDGGREKPSHSEEIRKN. Residues 573–584 show a composition bias toward polar residues; it reads QQEAPNQNQNCR. Residues 591 to 605 show a composition bias toward basic and acidic residues; the sequence is DGGREKPSHSEEIRK.

It belongs to the CCPG1 family. In terms of assembly, interacts with MCF2L. May interact with MCF2, ARHGEF1, BCR, VAV1 and FGD1, but not with TIAM1. Interacts with GTP-bound CDC42 and SRC.

The protein resides in the cytoplasmic granule membrane. Functionally, acts as an assembly platform for Rho protein signaling complexes. Limits guanine nucleotide exchange activity of MCF2L toward RHOA, which results in an inhibition of both its transcriptional activation ability and its transforming activity. Does not inhibit activity of MCF2L toward CDC42, or activity of MCF2 toward either RHOA or CDC42. May be involved in cell cycle regulation. The sequence is that of Cell cycle progression protein 1 (Ccpg1) from Mus musculus (Mouse).